Reading from the N-terminus, the 193-residue chain is Erythropoietin (193 aa).

The signal sequence occupies residues 1–27 (MGVHECPAWLWLLLSLLSLPLGLPVLG). Intrachain disulfides connect Cys34/Cys188 and Cys56/Cys60. The N-linked (GlcNAc...) asparagine glycan is linked to Asn51. Residues Asn65 and Asn110 are each glycosylated (N-linked (GlcNAc...) asparagine). O-linked (GalNAc...) serine glycosylation is present at Ser153.

This sequence belongs to the EPO/TPO family. In terms of tissue distribution, produced by kidney or liver of adult mammals and by liver of fetal or neonatal mammals.

The protein localises to the secreted. Hormone involved in the regulation of erythrocyte proliferation and differentiation and the maintenance of a physiological level of circulating erythrocyte mass. Binds to EPOR leading to EPOR dimerization and JAK2 activation thereby activating specific downstream effectors, including STAT1 and STAT3. In Homo sapiens (Human), this protein is Erythropoietin (EPO).